Here is a 72-residue protein sequence, read N- to C-terminus: Large ribosomal subunit protein bL28 (72 aa).

It belongs to the bacterial ribosomal protein bL28 family.

This is Large ribosomal subunit protein bL28 from Chlorobium phaeobacteroides (strain DSM 266 / SMG 266 / 2430).